The following is a 385-amino-acid chain: Isocitrate dehydrogenase [NAD] subunit beta, mitochondrial (385 aa).

Residues Met-1–Ala-34 constitute a mitochondrion transit peptide. At Lys-199 the chain carries N6-acetyllysine.

The protein belongs to the isocitrate and isopropylmalate dehydrogenases family. As to quaternary structure, heterooligomer of subunits alpha (IDH3A), beta (IDH3B), and gamma (IDH3G) in the apparent ratio of 2:1:1. The heterodimer containing one IDH3A and one IDH3B subunit and the heterodimer containing one IDH3A and one IDH3G subunit assemble into a heterotetramer (which contains two subunits of IDH3A, one of IDH3B and one of IDH3G) and further into the heterooctamer.

It is found in the mitochondrion. The heterotetramer and the heterodimer composed of IDH3A and IDH3G subunits can be allosterically activated by citrate (CIT) or/and ADP, and the two activators can act independently or synergistically. The heterodimer composed of IDH3A and IDH3B subunits cannot be allosterically regulated and the allosteric regulation of the heterotetramer is through the IDH3G subunit and not the IDH3B subunit. The IDH3G subunit contains the allosteric site which consists of a CIT-binding site and an ADP-binding site, and the binding of CIT and ADP causes conformational changes at the allosteric site which are transmitted to the active site in the catalytic subunit (IDH3A) through a cascade of conformational changes at the heterodimer interface, leading to stabilization of the isocitrate-binding at the active site and thus activation of the enzyme. ATP can activate the heterotetramer and the heterodimer composed of IDH3A and IDH3G subunits at low concentrations but inhibits their activities at high concentrations, whereas ATP exhibits only inhibitory effect on the heterodimer composed of IDH3A and IDH3B subunits. In terms of biological role, plays a structural role to facilitate the assembly and ensure the full activity of the enzyme catalyzing the decarboxylation of isocitrate (ICT) into alpha-ketoglutarate. The heterodimer composed of the alpha (IDH3A) and beta (IDH3B) subunits and the heterodimer composed of the alpha (IDH3A) and gamma (IDH3G) subunits, have considerable basal activity but the full activity of the heterotetramer (containing two subunits of IDH3A, one of IDH3B and one of IDH3G) requires the assembly and cooperative function of both heterodimers. This chain is Isocitrate dehydrogenase [NAD] subunit beta, mitochondrial (IDH3B), found in Homo sapiens (Human).